A 516-amino-acid polypeptide reads, in one-letter code: Cytochrome P450 1A2 (516 aa).

S69 is a glycosylation site (O-linked (GlcNAc) serine). Residues F226 and 361 to 365 contribute to the substrate site; that span reads DRPQL. C458 contacts heme.

Belongs to the cytochrome P450 family. As to quaternary structure, interacts with PGRMC1; the interaction requires PGRMC1 homodimerization. Heme serves as cofactor.

Its subcellular location is the endoplasmic reticulum membrane. It is found in the microsome membrane. It carries out the reaction an organic molecule + reduced [NADPH--hemoprotein reductase] + O2 = an alcohol + oxidized [NADPH--hemoprotein reductase] + H2O + H(+). It catalyses the reaction 17beta-estradiol + reduced [NADPH--hemoprotein reductase] + O2 = 2-hydroxy-17beta-estradiol + oxidized [NADPH--hemoprotein reductase] + H2O + H(+). The catalysed reaction is 17beta-estradiol + reduced [NADPH--hemoprotein reductase] + O2 = 4-hydroxy-17beta-estradiol + oxidized [NADPH--hemoprotein reductase] + H2O + H(+). The enzyme catalyses estrone + reduced [NADPH--hemoprotein reductase] + O2 = 2-hydroxyestrone + oxidized [NADPH--hemoprotein reductase] + H2O + H(+). It carries out the reaction estrone + reduced [NADPH--hemoprotein reductase] + O2 = 4-hydroxyestrone + oxidized [NADPH--hemoprotein reductase] + H2O + H(+). It catalyses the reaction cholesterol + reduced [NADPH--hemoprotein reductase] + O2 = 25-hydroxycholesterol + oxidized [NADPH--hemoprotein reductase] + H2O + H(+). The catalysed reaction is all-trans-retinol + reduced [NADPH--hemoprotein reductase] + O2 = all-trans-retinal + oxidized [NADPH--hemoprotein reductase] + 2 H2O + H(+). The enzyme catalyses all-trans-retinal + reduced [NADPH--hemoprotein reductase] + O2 = all-trans-retinoate + oxidized [NADPH--hemoprotein reductase] + H2O + 2 H(+). It carries out the reaction (5Z,8Z,11Z,14Z)-eicosatetraenoate + reduced [NADPH--hemoprotein reductase] + O2 = (14R,15S)-epoxy-(5Z,8Z,11Z)-eicosatrienoate + oxidized [NADPH--hemoprotein reductase] + H2O + H(+). It catalyses the reaction (5Z,8Z,11Z,14Z)-eicosatetraenoate + reduced [NADPH--hemoprotein reductase] + O2 = (14S,15R)-epoxy-(5Z,8Z,11Z)-eicosatrienoate + oxidized [NADPH--hemoprotein reductase] + H2O + H(+). The catalysed reaction is (5Z,8Z,11Z,14Z,17Z)-eicosapentaenoate + reduced [NADPH--hemoprotein reductase] + O2 = (17R,18S)-epoxy-(5Z,8Z,11Z,14Z)-eicosatetraenoate + oxidized [NADPH--hemoprotein reductase] + H2O + H(+). The enzyme catalyses (4Z,7Z,10Z,13Z,16Z,19Z)-docosahexaenoate + reduced [NADPH--hemoprotein reductase] + O2 = (19R,20S)-epoxy-(4Z,7Z,10Z,13Z,16Z)-docosapentaenoate + oxidized [NADPH--hemoprotein reductase] + H2O + H(+). It carries out the reaction (5S)-hydroperoxy-(6E,8Z,11Z,14Z)-eicosatetraenoate = 5-oxo-(6E,8Z,11Z,14Z)-eicosatetraenoate + H2O. It catalyses the reaction (12S)-hydroperoxy-(5Z,8Z,10E,14Z)-eicosatetraenoate = 12-oxo-(5Z,8Z,10E,14Z)-eicosatetraenoate + H2O. The catalysed reaction is (15S)-hydroperoxy-(5Z,8Z,11Z,13E)-eicosatetraenoate = 15-oxo-(5Z,8Z,11Z,13E)-eicosatetraenoate + H2O. The enzyme catalyses (13S)-hydroperoxy-(9Z,11E)-octadecadienoate = 13-oxo-(9Z,11E)-octadecadienoate + H2O. It carries out the reaction (5Z,8Z,11Z,14Z)-eicosatetraenoate + reduced [NADPH--hemoprotein reductase] + O2 = 13-hydroxy-(5Z,8Z,11Z,14Z)-eicosatetraenoate + oxidized [NADPH--hemoprotein reductase] + H2O + H(+). It catalyses the reaction (5Z,8Z,11Z,14Z)-eicosatetraenoate + reduced [NADPH--hemoprotein reductase] + O2 = 19-hydroxy-(5Z,8Z,11Z,14Z)-eicosatetraenoate + oxidized [NADPH--hemoprotein reductase] + H2O + H(+). The catalysed reaction is (9Z,12Z)-octadecadienoate + reduced [NADPH--hemoprotein reductase] + O2 = 11-hydroxy-(9Z,12Z)-octadecadienoate + oxidized [NADPH--hemoprotein reductase] + H2O + H(+). It functions in the pathway cofactor metabolism; retinol metabolism. Its pathway is steroid metabolism; cholesterol metabolism. The protein operates within lipid metabolism; arachidonate metabolism. Functionally, a cytochrome P450 monooxygenase involved in the metabolism of various endogenous substrates, including fatty acids, steroid hormones and vitamins. Mechanistically, uses molecular oxygen inserting one oxygen atom into a substrate, and reducing the second into a water molecule, with two electrons provided by NADPH via cytochrome P450 reductase (NADPH--hemoprotein reductase). Catalyzes the hydroxylation of carbon-hydrogen bonds. Exhibits high catalytic activity for the formation of hydroxyestrogens from estrone (E1) and 17beta-estradiol (E2), namely 2-hydroxy E1 and E2. Metabolizes cholesterol toward 25-hydroxycholesterol, a physiological regulator of cellular cholesterol homeostasis. May act as a major enzyme for all-trans retinoic acid biosynthesis in the liver. Catalyzes two successive oxidative transformation of all-trans retinol to all-trans retinal and then to the active form all-trans retinoic acid. Primarily catalyzes stereoselective epoxidation of the last double bond of polyunsaturated fatty acids (PUFA), displaying a strong preference for the (R,S) stereoisomer. Catalyzes bisallylic hydroxylation and omega-1 hydroxylation of PUFA. May also participate in eicosanoids metabolism by converting hydroperoxide species into oxo metabolites (lipoxygenase-like reaction, NADPH-independent). Plays a role in the oxidative metabolism of xenobiotics. Catalyzes the N-hydroxylation of heterocyclic amines and the O-deethylation of phenacetin. Metabolizes caffeine via N3-demethylation. In Oryctolagus cuniculus (Rabbit), this protein is Cytochrome P450 1A2 (CYP1A2).